Consider the following 81-residue polypeptide: Penaeidin-3c (81 aa).

Positions 1-19 (MRLVVCLVFLASFALVCQG) are cleaved as a signal peptide. At glutamine 20 the chain carries Pyrrolidone carboxylic acid. Disulfide bonds link cysteine 50–cysteine 65, cysteine 54–cysteine 72, and cysteine 66–cysteine 73. At serine 80 the chain carries Serine amide.

It belongs to the penaeidin family. Higher expression in hemocytes and to a lesser extent in heart, testis, gills, intestine, lymphoid organ and hepatopancreas. Traces in eyes and subcuticular epithelium. Not present in the brain.

The protein localises to the cytoplasmic granule. In terms of biological role, antibacterial activity against M.luteus and E.coli bacteria. Antifungal activity against N.crassa and F.oxysporum. Presents chitin-binding activity. The sequence is that of Penaeidin-3c from Penaeus vannamei (Whiteleg shrimp).